A 4830-amino-acid chain; its full sequence is Siderophore peptide synthetase fer3 (4830 aa).

Residues 197-623 are adenylation 1; it reads LDQAEKFPDR…LGRMNAEQVK (427 aa). The region spanning 751–833 is the Carrier 1 domain; the sequence is ANEDPVTQAL…DLIPLLSDTT (83 aa). Residue Ser788 is modified to O-(pantetheine 4'-phosphoryl)serine. Positions 879-1317 are condensation 1; that stretch reads QKIFPTTATQ…HSLMREPETT (439 aa). The tract at residues 1358 to 1781 is adenylation 2; that stretch reads FENKAATEPE…IGRRDDLVKL (424 aa). A Carrier 2 domain is found at 1929–2005; it reads GEDGDLQCQV…MLIRGLATKT (77 aa). Ser1966 is subject to O-(pantetheine 4'-phosphoryl)serine. The interval 2048–2503 is condensation 2; the sequence is IPCSTLQEGM…LLDQVVSLLT (456 aa). The segment at 2573–2977 is adenylation 3; the sequence is AGTPETACIN…LGRRDEQEKI (405 aa). A Carrier 3 domain is found at 3122–3198; the sequence is RPLSSLEREI…DIAAELSDSK (77 aa). Ser3159 bears the O-(pantetheine 4'-phosphoryl)serine mark. Residues 3232-3621 form a condensation 3 region; that stretch reads KVLPCLPSQE…RDRDELRISA (390 aa). Residues 3685 to 3760 enclose the Carrier 4 domain; that stretch reads TAAEEQIRDL…GLSKLLDQRQ (76 aa). Ser3720 bears the O-(pantetheine 4'-phosphoryl)serine mark. Positions 3779-4199 are condensation 4; it reads RYKATPLQAG…GVQIKAGASD (421 aa). One can recognise a Carrier 5 domain in the interval 4264–4340; it reads SLSTAEQDIV…RLTVATETRS (77 aa). An O-(pantetheine 4'-phosphoryl)serine modification is found at Ser4301. A condensation 5 region spans residues 4381–4708; it reads VLPLLTGQQQ…DLVSRAEHQQ (328 aa).

The protein belongs to the NRP synthetase family.

The protein operates within siderophore biosynthesis. Its function is as follows. Nonribosomal peptide synthetase; part of the gene cluster that mediates the biosynthesis of siderophore ferrichrome A which is contributing to organismal virulence. The first step of ferrichrome A biosynthesis is performed by the HMG-CoA synthase hcs1 which catalyzes the generation of HMG-CoA and CoA using acetoacetyl-CoA and acetyl-CoA as substrates. The enoyl-CoA isomerase/hydratase fer4 then catalyzes the conversion of hcs1-produced HMG-CoA to methylglutaconyl-CoA. The acyltransferase fer5 then fuses the fer4-generated methylglutaconyl-CoA with sid1-generated hydroxyornithine to yield methylglutaconyl hydroxyornithine. Methylglutaconyl hydroxyornithine is then available for use by the NRPS fer3 to generate ferrichrome A. The protein is Siderophore peptide synthetase fer3 of Mycosarcoma maydis (Corn smut fungus).